We begin with the raw amino-acid sequence, 92 residues long: Small ribosomal subunit protein uS19 (92 aa).

The protein belongs to the universal ribosomal protein uS19 family.

Functionally, protein S19 forms a complex with S13 that binds strongly to the 16S ribosomal RNA. This chain is Small ribosomal subunit protein uS19, found in Caulobacter sp. (strain K31).